Here is a 938-residue protein sequence, read N- to C-terminus: Isoleucine--tRNA ligase (938 aa).

The short motif at 58–68 (PYANGSIHIGH) is the 'HIGH' region element. E561 is a binding site for L-isoleucyl-5'-AMP. Residues 602–606 (KMSKS) carry the 'KMSKS' region motif. K605 is a binding site for ATP. Zn(2+)-binding residues include C901, C904, C921, and C924.

This sequence belongs to the class-I aminoacyl-tRNA synthetase family. IleS type 1 subfamily. As to quaternary structure, monomer. Zn(2+) is required as a cofactor.

Its subcellular location is the cytoplasm. It catalyses the reaction tRNA(Ile) + L-isoleucine + ATP = L-isoleucyl-tRNA(Ile) + AMP + diphosphate. In terms of biological role, catalyzes the attachment of isoleucine to tRNA(Ile). As IleRS can inadvertently accommodate and process structurally similar amino acids such as valine, to avoid such errors it has two additional distinct tRNA(Ile)-dependent editing activities. One activity is designated as 'pretransfer' editing and involves the hydrolysis of activated Val-AMP. The other activity is designated 'posttransfer' editing and involves deacylation of mischarged Val-tRNA(Ile). The chain is Isoleucine--tRNA ligase from Citrobacter koseri (strain ATCC BAA-895 / CDC 4225-83 / SGSC4696).